The sequence spans 481 residues: Aspartyl/glutamyl-tRNA(Asn/Gln) amidotransferase subunit B (481 aa).

The protein belongs to the GatB/GatE family. GatB subfamily. In terms of assembly, heterotrimer of A, B and C subunits.

The enzyme catalyses L-glutamyl-tRNA(Gln) + L-glutamine + ATP + H2O = L-glutaminyl-tRNA(Gln) + L-glutamate + ADP + phosphate + H(+). It catalyses the reaction L-aspartyl-tRNA(Asn) + L-glutamine + ATP + H2O = L-asparaginyl-tRNA(Asn) + L-glutamate + ADP + phosphate + 2 H(+). In terms of biological role, allows the formation of correctly charged Asn-tRNA(Asn) or Gln-tRNA(Gln) through the transamidation of misacylated Asp-tRNA(Asn) or Glu-tRNA(Gln) in organisms which lack either or both of asparaginyl-tRNA or glutaminyl-tRNA synthetases. The reaction takes place in the presence of glutamine and ATP through an activated phospho-Asp-tRNA(Asn) or phospho-Glu-tRNA(Gln). This is Aspartyl/glutamyl-tRNA(Asn/Gln) amidotransferase subunit B from Ectopseudomonas mendocina (strain ymp) (Pseudomonas mendocina).